We begin with the raw amino-acid sequence, 161 residues long: Small ribosomal subunit protein uS15 (161 aa).

Residues 1 to 13 are compositionally biased toward basic residues; sequence MAGKRRKKGRSHS. The tract at residues 1-22 is disordered; that stretch reads MAGKRRKKGRSHSTRPATPTVP.

This sequence belongs to the universal ribosomal protein uS15 family. As to quaternary structure, part of the 30S ribosomal subunit.

This chain is Small ribosomal subunit protein uS15, found in Hyperthermus butylicus (strain DSM 5456 / JCM 9403 / PLM1-5).